A 313-amino-acid polypeptide reads, in one-letter code: MVGKGGYRQINKALNICAFEDYLDGQQKSLPPLNDVEQISPNVLRVLGQNPGKFTLQGTNTYIIGTGEKRLLIDTGQGIPEWADLISSTLANSSIRLSAVLLSHWHGDHTGGVPDLLRLYPHLSDSIYKHSPSKGQQPIEDGQVFEVEGATVRAVHAPGHSHDHMCFVIEEENAMFTGDNVLGHGTAAVELLSTWMATLRLMQSHNCGRGYPAHGEVIPNLNAKISGELASKERRERQVLQHLNRIRKEEQGGKGSATVQRLVVEMYGDTDQQMREQALEPFIDEVLRKLAEDEKVAFQLRAGEKTWFAIALE.

His-104, His-106, Asp-108, and His-109 together coordinate Zn(2+). Residue Asp-108 is the Proton donor/acceptor of the active site.

The protein belongs to the metallo-beta-lactamase superfamily. It depends on Zn(2+) as a cofactor.

The catalysed reaction is atrochrysone carboxyl-[ACP] + H2O = atrochrysone carboxylate + holo-[ACP] + H(+). The protein operates within secondary metabolite biosynthesis. In terms of biological role, lactamase-like protein; part of the gene cluster that mediates the biosynthesis of pestheic acid, a diphenyl ether which is a biosynthetic precursor of the unique chloropupukeananes. The biosynthesis initiates from condensation of acetate and malonate units catalyzed by the non-reducing PKS ptaA. As the ptaA protein is TE/CLC domain-deficient, hydrolysis and Claisen cyclization of the polyketide could be catalyzed by ptaB containing a beta-lactamase domain. The ptaB protein might hydrolyze the thioester bond between the ACP of ptaA and the intermediate to release atrochrysone carboxylic acid, which is spontaneously dehydrated to form endocrocin anthrone. Endocrocin anthrone is then converted to endocrocin, catalyzed by the anthrone oxygenase ptaC. Spontaneous decarboxylation of endocrocin occurs to generate emodin. An O-methyltransferase (ptaH or ptaI) could methylate emodin to form physcion. PtaJ could then catalyze the oxidative cleavage of physcion, and rotation of the intermediate could then afford desmethylisosulochrin. PtaF, a putative NADH-dependent oxidoreductase, might also participate in the oxidative cleavage step. Desmethylisosulochrin is then transformed by another O-methyltransferase (ptaH or ptaI) to form isosulochrin. Chlorination of isosulochrin by ptaM in the cyclohexadienone B ring then produces chloroisosulochrin. PtaE is responsible for the oxidative coupling reactions of both benzophenones isosulochrin and chloroisosulochrin to RES-1214-1 and pestheic acid respectively, regardless of chlorination. In Pestalotiopsis fici (strain W106-1 / CGMCC3.15140), this protein is Lactamase-like protein ptaB.